The sequence spans 701 residues: Elongation factor G 1 (701 aa).

Positions 8–290 (ERYRNIGISA…AVIDYLPSPL (283 aa)) constitute a tr-type G domain. GTP is bound by residues 17 to 24 (AHIDAGKT), 88 to 92 (DTPGH), and 142 to 145 (NKMD).

The protein belongs to the TRAFAC class translation factor GTPase superfamily. Classic translation factor GTPase family. EF-G/EF-2 subfamily.

The protein resides in the cytoplasm. Its function is as follows. Catalyzes the GTP-dependent ribosomal translocation step during translation elongation. During this step, the ribosome changes from the pre-translocational (PRE) to the post-translocational (POST) state as the newly formed A-site-bound peptidyl-tRNA and P-site-bound deacylated tRNA move to the P and E sites, respectively. Catalyzes the coordinated movement of the two tRNA molecules, the mRNA and conformational changes in the ribosome. The polypeptide is Elongation factor G 1 (Paraburkholderia xenovorans (strain LB400)).